We begin with the raw amino-acid sequence, 119 residues long: Protein RALF-like 22 (119 aa).

The signal sequence occupies residues 1–23; that stretch reads MTNTRAIYAVIAILAIVISAVES. Positions 24-70 are cleaved as a propeptide — removed in mature form; that stretch reads TGDFGDSLDFVRAGSSSLFSGCTGSIAECIAEEEEMEFDSDISRRIL. 2 disulfide bridges follow: cysteine 88/cysteine 98 and cysteine 111/cysteine 117.

The protein belongs to the plant rapid alkalinization factor (RALF) family. Proteolytically cleaved, probably by S1P, a subtilisin-like serine protease (subtilase).

It is found in the secreted. Cell signaling peptide that may regulate plant stress, growth, and development. Mediates a rapid alkalinization of extracellular space by mediating a transient increase in the cytoplasmic Ca(2+) concentration leading to a calcium-dependent signaling events through a cell surface receptor and a concomitant activation of some intracellular mitogen-activated protein kinases. The protein is Protein RALF-like 22 (RALFL22) of Arabidopsis thaliana (Mouse-ear cress).